A 139-amino-acid chain; its full sequence is NADH dehydrogenase [ubiquinone] 1 alpha subcomplex subunit MCI4 (139 aa).

Belongs to the complex I NDUFA5 subunit family.

Its subcellular location is the mitochondrion inner membrane. Accessory subunit of the mitochondrial membrane respiratory chain NADH dehydrogenase (Complex I), that is believed not to be involved in catalysis. Complex I functions in the transfer of electrons from NADH to the respiratory chain. The immediate electron acceptor for the enzyme is believed to be ubiquinone. Involved in osmotic and oxidative resistance, yeast to hypha transition and the ability to damage and invade oral epithelial cells. In Candida albicans (strain SC5314 / ATCC MYA-2876) (Yeast), this protein is NADH dehydrogenase [ubiquinone] 1 alpha subcomplex subunit MCI4.